The chain runs to 170 residues: Cathelicidin antimicrobial peptide (170 aa).

Positions 1–30 (MKTQRDSPSLGRWSLVLLLLGLVMPLAIVA) are cleaved as a signal peptide. Positions 31–131 (QVLSYQEAVL…DISCDKDNRR (101 aa)) are cleaved as a propeptide — cathelin-like domain (CLD). 2 cysteine pairs are disulfide-bonded: cysteine 86/cysteine 97 and cysteine 108/cysteine 125. The interval 150 to 162 (FKRIVQRIKDFLQ) is active core.

This sequence belongs to the cathelicidin family. In terms of assembly, monomer, homodimer or homotrimer (in vitro). Oligomerizes as tetra- or hexamer in solution (in vitro). Post-translationally, proteolytically cleaved by proteinase PRTN3 into antibacterial peptide LL-37. Proteolytically cleaved by cathepsin CTSG and neutrophil elastase ELANE. In terms of processing, resistant to proteolytic degradation in solution, and when bound to both zwitterionic (mimicking mammalian membranes) and negatively charged membranes (mimicking bacterial membranes). After secretion onto the skin surface, the CAMP gene product is processed by a serine protease-dependent mechanism into multiple novel antimicrobial peptides distinct from and shorter than cathelicidin LL-37. These peptides show enhanced antimicrobial action, acquiring the ability to kill skin pathogens such as S.aureus, E.coli and C.albicans. These peptides have lost the ability to stimulate CXCL8/IL8 release from keratinocytes. The peptides act synergistically, killing bacteria at lower concentrations when present together, and maintain activity at increased salt condition.

It is found in the secreted. It localises to the vesicle. In terms of biological role, antimicrobial protein that is an integral component of the innate immune system. Binds to bacterial lipopolysaccharides (LPS). Acts via neutrophil N-formyl peptide receptors to enhance the release of CXCL2. Postsecretory processing generates multiple cathelicidin antimicrobial peptides with various lengths which act as a topical antimicrobial defense in sweat on skin. The unprocessed precursor form, cathelicidin antimicrobial peptide, inhibits the growth of Gram-negative E.coli and E.aerogenes with efficiencies comparable to that of the mature peptide LL-37 (in vitro). Antimicrobial peptide that is an integral component of the innate immune system. Binds to bacterial lipopolysaccharides (LPS). Causes membrane permeabilization by forming transmembrane pores (in vitro). Causes lysis of E.coli. Exhibits antimicrobial activity against Gram-negative bacteria such as P.aeruginosa, S.typhimurium, E.aerogenes, E.coli and P.syringae, Gram-positive bacteria such as L.monocytogenes, S.epidermidis, S.pyogenes and S.aureus, as well as vancomycin-resistant enterococci (in vitro). Exhibits antimicrobial activity against methicillin-resistant S.aureus, P.mirabilis, and C.albicans in low-salt media, but not in media containing 100 mM NaCl (in vitro). Forms chiral supramolecular assemblies with quinolone signal (PQS) molecules of P.aeruginosa, which may lead to interference of bacterial quorum signaling and perturbance of bacterial biofilm formation. May form supramolecular fiber-like assemblies on bacterial membranes. Induces cytokine and chemokine producation as well as TNF/TNFA and CSF2/GMCSF production in normal human keratinocytes. Exhibits hemolytic activity against red blood cells. Its function is as follows. Exhibits antimicrobial activity against E.coli and B.megaterium (in vitro). The polypeptide is Cathelicidin antimicrobial peptide (Nomascus concolor (Black crested gibbon)).